A 298-amino-acid chain; its full sequence is Nucleotide-binding protein Dred_3054 (298 aa).

Position 20–27 (20–27) interacts with ATP; that stretch reads GMSGAGKT. 71 to 74 is a GTP binding site; that stretch reads DIRG.

The protein belongs to the RapZ-like family.

In terms of biological role, displays ATPase and GTPase activities. In Desulforamulus reducens (strain ATCC BAA-1160 / DSM 100696 / MI-1) (Desulfotomaculum reducens), this protein is Nucleotide-binding protein Dred_3054.